The chain runs to 457 residues: Subtilisin-like serine protease Pen c 2 (457 aa).

A signal peptide spans 1 to 16; the sequence is MKGFLGLALLPLLTAA. Residues 17–136 constitute a propeptide, removed in mature form; it reads SPVSVESIHN…IEKDSEVHHF (120 aa). In terms of domain architecture, Inhibitor I9 spans 43-134; it reads SYIVVFKKHV…DYIEKDSEVH (92 aa). In terms of domain architecture, Peptidase S8 spans 146–457; that stretch reads PWGLARISHR…YTDIVAQGGY (312 aa). Residues Asp182 and His214 each act as charge relay system in the active site. Residues Asn244 and Asn284 are each glycosylated (N-linked (GlcNAc...) asparagine). Ser380 functions as the Charge relay system in the catalytic mechanism. An N-linked (GlcNAc...) asparagine glycan is attached at Asn447.

The protein belongs to the peptidase S8 family.

Its function is as follows. Serine protease. This chain is Subtilisin-like serine protease Pen c 2, found in Penicillium citrinum.